A 235-amino-acid polypeptide reads, in one-letter code: tRNA (guanine-N(7)-)-methyltransferase (235 aa).

Residues Gly60, 83–84 (EI), 116–117 (NA), and Leu136 contribute to the S-adenosyl-L-methionine site. The active site involves Asp139. 214-216 (SEE) provides a ligand contact to S-adenosyl-L-methionine.

It belongs to the class I-like SAM-binding methyltransferase superfamily. TrmB family.

Its subcellular location is the nucleus. The catalysed reaction is guanosine(46) in tRNA + S-adenosyl-L-methionine = N(7)-methylguanosine(46) in tRNA + S-adenosyl-L-homocysteine. Its pathway is tRNA modification; N(7)-methylguanine-tRNA biosynthesis. Catalyzes the formation of N(7)-methylguanine at position 46 (m7G46) in tRNA. The sequence is that of tRNA (guanine-N(7)-)-methyltransferase from Anopheles gambiae (African malaria mosquito).